A 351-amino-acid polypeptide reads, in one-letter code: Large ribosomal subunit protein uL3 (351 aa).

Disordered stretches follow at residues 1–31 (MGHR…TPRT) and 246–271 (KGSR…GQLG).

This sequence belongs to the universal ribosomal protein uL3 family. As to quaternary structure, part of the 50S ribosomal subunit. Forms a cluster with proteins L14 and L24e.

One of the primary rRNA binding proteins, it binds directly near the 3'-end of the 23S rRNA, where it nucleates assembly of the 50S subunit. The chain is Large ribosomal subunit protein uL3 from Saccharolobus solfataricus (strain ATCC 35092 / DSM 1617 / JCM 11322 / P2) (Sulfolobus solfataricus).